We begin with the raw amino-acid sequence, 367 residues long: uncharacterized protein (367 aa).

Residues 6-26 (IAAGVVVALAAVWCTSAWFTG) traverse the membrane as a helical segment.

This sequence to E.coli YdgA and YihF.

The protein localises to the membrane. This is an uncharacterized protein from Haemophilus influenzae (strain ATCC 51907 / DSM 11121 / KW20 / Rd).